We begin with the raw amino-acid sequence, 421 residues long: Serine--tRNA ligase (421 aa).

230–232 (TAE) contributes to the L-serine binding site. 259-261 (RRE) is an ATP binding site. Glu282 provides a ligand contact to L-serine. ATP is bound at residue 346-349 (EISS). Residue Ser381 coordinates L-serine.

It belongs to the class-II aminoacyl-tRNA synthetase family. Type-1 seryl-tRNA synthetase subfamily. In terms of assembly, homodimer. The tRNA molecule binds across the dimer.

Its subcellular location is the cytoplasm. It catalyses the reaction tRNA(Ser) + L-serine + ATP = L-seryl-tRNA(Ser) + AMP + diphosphate + H(+). The enzyme catalyses tRNA(Sec) + L-serine + ATP = L-seryl-tRNA(Sec) + AMP + diphosphate + H(+). Its pathway is aminoacyl-tRNA biosynthesis; selenocysteinyl-tRNA(Sec) biosynthesis; L-seryl-tRNA(Sec) from L-serine and tRNA(Sec): step 1/1. Functionally, catalyzes the attachment of serine to tRNA(Ser). Is also able to aminoacylate tRNA(Sec) with serine, to form the misacylated tRNA L-seryl-tRNA(Sec), which will be further converted into selenocysteinyl-tRNA(Sec). In Acidithiobacillus ferrooxidans (strain ATCC 23270 / DSM 14882 / CIP 104768 / NCIMB 8455) (Ferrobacillus ferrooxidans (strain ATCC 23270)), this protein is Serine--tRNA ligase.